The sequence spans 224 residues: 7-cyano-7-deazaguanine synthase (224 aa).

An ATP-binding site is contributed by 8 to 18; that stretch reads LSGGMDSAAVI. Zn(2+) is bound by residues Cys-186, Cys-196, Cys-199, and Cys-202.

This sequence belongs to the QueC family. Requires Zn(2+) as cofactor.

It carries out the reaction 7-carboxy-7-deazaguanine + NH4(+) + ATP = 7-cyano-7-deazaguanine + ADP + phosphate + H2O + H(+). It functions in the pathway purine metabolism; 7-cyano-7-deazaguanine biosynthesis. Its function is as follows. Catalyzes the ATP-dependent conversion of 7-carboxy-7-deazaguanine (CDG) to 7-cyano-7-deazaguanine (preQ(0)). The chain is 7-cyano-7-deazaguanine synthase from Xanthomonas axonopodis pv. citri (strain 306).